Here is a 269-residue protein sequence, read N- to C-terminus: uncharacterized protein (269 aa).

5 consecutive transmembrane segments (helical) span residues 65–85 (FSLF…LFVM), 156–176 (VTSV…ISMV), 182–202 (YTRI…WLGF), 206–226 (MMSF…NDFW), and 242–262 (TLSA…EFSF). Positions 266-269 (KKKW) match the Di-lysine motif motif.

The protein belongs to the SURF4 family.

The protein resides in the membrane. This is an uncharacterized protein from Caenorhabditis elegans.